Consider the following 87-residue polypeptide: Protein anon-73B1 (87 aa).

A helical transmembrane segment spans residues 25–47 (LLIRYGLYVGALFQFVCISAAVL). The interval 50-87 (NNPDSQSNPETGEVTEREGEPVRTRLHKIRKLEKKKRR) is disordered. The segment covering 63 to 72 (VTEREGEPVR) has biased composition (basic and acidic residues). A compositionally biased stretch (basic residues) spans 73–87 (TRLHKIRKLEKKKRR).

It belongs to the UPF0239 family.

Its subcellular location is the membrane. This chain is Protein anon-73B1 (anon-73B1), found in Drosophila simulans (Fruit fly).